Reading from the N-terminus, the 413-residue chain is Patatin-like protein 3 (413 aa).

The region spanning 54-245 is the PNPLA domain; the sequence is LSVDGGARPE…ALGNPTAAAI (192 aa). Positions 58–61 match the GGXR motif; sequence GGAR. The active-site Nucleophile is the serine 100. The disordered stretch occupies residues 384–413; the sequence is EHGRRKQHVPPAASGGGGGGLDCHVSKKQP.

It belongs to the patatin family.

In terms of biological role, possesses non-specific lipolytic acyl hydrolase (LAH) activity. Hydrolyzes phospholipids as well as galactolipids. May play a role in disease resistance. The chain is Patatin-like protein 3 (PLP3) from Oryza sativa subsp. indica (Rice).